A 561-amino-acid chain; its full sequence is MIFYDKLKPADVLVIGSADGRVIEAIEYIADLHKQHGFKFAICLGNLFSHKRTTSADVVKLKNEKVKVPIPVYFGVGTAGLPESIISHMAMYGPEVAPNLFCMGICGFMKTFYKFTIAQLGGSYNEEKYYQPPEKFEQSLNEKCFHRSDVQKLSKRCDILFSSEWPEDVQENSTLPERKLPKGCMPLAALAANCMPQYFFVPGPVYYEREPYKNSAAINVNTGTVTHFVALAPFKNSKNEKFSYAFTLYPLTTEYMQPAPPNCTASPFEHRPIPLKRASEDQIIPQQTNKFHKSKSSTALFKSKKDSSSSLNKMHKSESHSALNNLHKSESGTSLNNRRSKVGPGSCFFCLSNPNVALHLIVAIGNEAYMALPKGPLTTTASNTPALASSGHVLIIPIAHASALSTLSDTSYEKTLNEMNRFRKAVTDMYNACDSDALVYEISRANGVHLHWQMIPIPKISSHRIESVFLEMAKEAGYDFEERDVEPHELNYFRVFLPSGKILIHRLQLRERFDLQFGRRAAAKILGLEDRVDWRKCVQTEDEEKAESEAFKMCFKPYDFT.

Residues 286 to 338 (QQTNKFHKSKSSTALFKSKKDSSSSLNKMHKSESHSALNNLHKSESGTSLNNR) form a disordered region. S296 bears the Phosphoserine mark. Residue T298 is modified to Phosphothreonine. S317, S319, S331, and S334 each carry phosphoserine. Polar residues predominate over residues 320-337 (HSALNNLHKSESGTSLNN).

This sequence belongs to the CWF19 family.

The protein resides in the nucleus. Has a role in meiosis. The sequence is that of CWF19-like protein mug161 (mug161) from Schizosaccharomyces pombe (strain 972 / ATCC 24843) (Fission yeast).